The primary structure comprises 465 residues: uncharacterized protein (465 aa).

The segment covering 1-15 (MEKNYIFENSIYKDE) has biased composition (basic and acidic residues). 2 disordered regions span residues 1–31 (MEKN…NNSS) and 288–320 (QLEK…EQLP).

This is an uncharacterized protein from Dictyostelium discoideum (Social amoeba).